An 85-amino-acid chain; its full sequence is Teretoxin Tan9.6 (85 aa).

Residues 1-21 (MMSKTGALLLTFMILVLFSMA) form the signal peptide. The propeptide occupies 22–52 (AADALGERFEDHEQKIREQDAGVGLLSLMGR).

Contains 3 disulfide bonds. As to expression, expressed by the venom duct.

The protein resides in the secreted. In Terebra anilis (Auger snail), this protein is Teretoxin Tan9.6.